Consider the following 319-residue polypeptide: Major intracellular serine protease (319 aa).

A propeptide spanning residues 1-17 is cleaved from the precursor; sequence MNGEIRLIPYVTNEQIM. The region spanning 23-307 is the Peptidase S8 domain; it reads PEGIKVIKAP…FLYLTAPDEL (285 aa). Residues D50, H87, and S246 each act as charge relay system in the active site.

It belongs to the peptidase S8 family. Homodimer.

It is found in the cytoplasm. Major intracellular protease produced by Bacillus subtilis. The chain is Major intracellular serine protease (isp) from Bacillus subtilis (strain 168).